The primary structure comprises 146 residues: Large ribosomal subunit protein uL15 (146 aa).

Residues 1-58 (MKLNELSPPKGARTARKRKGRGPGSGLGKTAGKGHKGQKARSGGGVRPGFEGGQMPVH) are disordered. 2 stretches are compositionally biased toward gly residues: residues 22–31 (GPGSGLGKTA) and 42–52 (SGGGVRPGFEG).

Belongs to the universal ribosomal protein uL15 family. Part of the 50S ribosomal subunit.

Its function is as follows. Binds to the 23S rRNA. This is Large ribosomal subunit protein uL15 from Desulfatibacillum aliphaticivorans.